Consider the following 217-residue polypeptide: Protein-L-isoaspartate O-methyltransferase (217 aa).

Residue serine 64 is part of the active site.

It belongs to the methyltransferase superfamily. L-isoaspartyl/D-aspartyl protein methyltransferase family.

The protein localises to the cytoplasm. The catalysed reaction is [protein]-L-isoaspartate + S-adenosyl-L-methionine = [protein]-L-isoaspartate alpha-methyl ester + S-adenosyl-L-homocysteine. In terms of biological role, catalyzes the methyl esterification of L-isoaspartyl residues in peptides and proteins that result from spontaneous decomposition of normal L-aspartyl and L-asparaginyl residues. It plays a role in the repair and/or degradation of damaged proteins. This Rhodopseudomonas palustris (strain BisB5) protein is Protein-L-isoaspartate O-methyltransferase.